Here is a 23-residue protein sequence, read N- to C-terminus: Potassium channel toxin alpha-KTx 13.3 (23 aa).

Intrachain disulfides connect C2-C15, C5-C20, and C9-C22. Positions 13–20 are interaction with Ca(2+)-activated K(+) channels; that stretch reads GKCINGRC. The residue at position 23 (Y23) is a Tyrosine amide.

As to expression, expressed by the venom gland.

The protein localises to the secreted. In terms of biological role, reversibly blocks Shaker B potassium channels, with a dissociation constant of 200 nM. The polypeptide is Potassium channel toxin alpha-KTx 13.3 (Tityus pachyurus (Colombian scorpion)).